An 825-amino-acid polypeptide reads, in one-letter code: Interleukin-4 receptor subunit alpha (825 aa).

Positions 1-25 are cleaved as a signal peptide; it reads MGWLCSGLLFPVSCLVLLQVASSGN. The Extracellular portion of the chain corresponds to 26–232; that stretch reads MKVLQEPTCV…NSYREPFEQH (207 aa). A disulfide bridge connects residues cysteine 34 and cysteine 44. The N-linked (GlcNAc...) asparagine glycan is linked to asparagine 53. Cysteine 74 and cysteine 86 are joined by a disulfide. 5 N-linked (GlcNAc...) asparagine glycosylation sites follow: asparagine 98, asparagine 128, asparagine 134, asparagine 176, and asparagine 209. Positions 125–224 constitute a Fibronectin type-III domain; it reads APGNLTVHTN…WSPSTKWHNS (100 aa). The WSXWS motif signature appears at 212-216; the sequence is WSEWS. The helical transmembrane segment at 233–256 threads the bilayer; sequence LLLGVSVSCIVILAVCLLCYVSIT. The Cytoplasmic portion of the chain corresponds to 257–825; it reads KIKKEWWDQI…SVGPTYMRVS (569 aa). The Box 1 motif signature appears at 262–270; that stretch reads WWDQIPNPA. Disordered regions lie at residues 373–397 and 433–485; these read EEEEVEEEKGSFCASPESSRDDFQE and LPPS…LTCT. The interval 437 to 557 is required for IRS1 activation and IL4-induced cell growth; it reads GSTSAHMPWD…ETWEQILRRN (121 aa). Residues 475 to 485 show a composition bias toward polar residues; that stretch reads PTQSPDNLTCT. 4 positions are modified to phosphotyrosine: tyrosine 497, tyrosine 575, tyrosine 603, and tyrosine 631. Positions 558-657 are required for IL4-induced gene expression; that stretch reads VLQHGAAAAP…VPVPLFTFGL (100 aa). A disordered region spans residues 651-703; sequence PLFTFGLDREPPRSPQSSHLPSSSPEHLGLEPGEKVEDMPKPPLPQEQATDPL. A compositionally biased stretch (low complexity) spans 665–677; sequence PQSSHLPSSSPEH. Over residues 678-690 the composition is skewed to basic and acidic residues; that stretch reads LGLEPGEKVEDMP. Residues 711-716 carry the ITIM motif motif; it reads IVYSAL. A disordered region spans residues 782–809; the sequence is PSGISEKSKSSSSFHPAPGNAQSSSQTP.

It belongs to the type I cytokine receptor family. Type 4 subfamily. In terms of assembly, the functional IL4 receptor is formed by initial binding of IL4 to IL4R. Subsequent recruitment to the complex of the common gamma chain, in immune cells, creates a type I receptor and, in non-immune cells, of IL13RA1 forms a type II receptor. IL4R can also interact with the IL13/IL13RA1 complex to form a similar type II receptor. Interacts with PIK3C3. Interacts with the SH2-containing phosphatases, PTPN6/SHIP1, PTPN11/SHIP2 and INPP5D/SHIP. Interacts with JAK1 through a Box 1-containing region; inhibited by SOCS5. Interacts with SOCS5; inhibits IL4 signaling. Interacts with JAK3. Interacts with CLM1. Interacts with IL13RA2. Post-translationally, on IL4 binding, phosphorylated on C-terminal tyrosine residues. Phosphorylation on any one of tyrosine residues, Tyr-575, Tyr-603 or Tyr-631, is required for STAT6-induced gene induction. In terms of processing, the soluble form (sIL4R/IL4BP) can also be produced by proteolytic cleavage at the cell surface (shedding) by a metalloproteinase. As to expression, isoform 1 and isoform 2 are highly expressed in activated T-cells.

The protein resides in the cell membrane. The protein localises to the secreted. Receptor for both interleukin 4 and interleukin 13. Couples to the JAK1/2/3-STAT6 pathway. The IL4 response is involved in promoting Th2 differentiation. The IL4/IL13 responses are involved in regulating IgE production and, chemokine and mucus production at sites of allergic inflammation. In certain cell types, can signal through activation of insulin receptor substrates, IRS1/IRS2. In terms of biological role, soluble IL4R (sIL4R) inhibits IL4-mediated cell proliferation and IL5 up-regulation by T-cells. The sequence is that of Interleukin-4 receptor subunit alpha (IL4R) from Homo sapiens (Human).